A 1489-amino-acid polypeptide reads, in one-letter code: Calmodulin-regulated spectrin-associated protein 2 (1489 aa).

The Calponin-homology (CH) domain maps to 222 to 335; sequence WKLVPARYRK…FMAELFWWFE (114 aa). Residues 375-415 are disordered; it reads SSDFPSSGEGATFTQSHHHLPSRYSRPQAHSSASGGIRRSS. Positions 405-415 are enriched in low complexity; that stretch reads SSASGGIRRSS. Residues S416 and S418 each carry the phosphoserine modification. Phosphothreonine is present on T426. A phosphoserine mark is found at S464, S598, S599, S611, and S673. Disordered stretches follow at residues 611–639 and 668–730; these read SPITDNTEVDTGIHVPSEDIPETMDEDSS and TREA…GSEL. A compositionally biased stretch (polar residues) spans 668-679; the sequence is TREALSPCPSTV. A Phosphothreonine modification is found at T678. S680 carries the phosphoserine modification. Residues 680–699 are compositionally biased toward low complexity; it reads STKSQPGSSASSSSGVKMTS. Over residues 703–713 the composition is skewed to basic and acidic residues; the sequence is QKFRKLNHTDG. Residues 756 to 793 are a coiled coil; that stretch reads LLASEMVHLRMKLEEKRRAIEAQKKKMEAAFTKQRQKM. The tract at residues 812-844 is disordered; sequence LREEAAGAEDEKVYTDRAKEKESQKTDGQRSKS. S862 carries the post-translational modification Phosphoserine. The stretch at 887–926 forms a coiled coil; it reads EILEYTKSIEKLNSSLHFLQQEMQRLSLQQEMLMQMREQQ. The interval 922-1034 is MBD region; it reads MREQQSWVIS…IQTRSFVCFG (113 aa). The interval 925-1017 is disordered; it reads QQSWVISPPQ…SVDSLPRLRR (93 aa). Phosphoserine is present on residues S931 and S936. The segment covering 960 to 989 has biased composition (polar residues); the sequence is SSDSPRPTHPSPQSSNRKSASFSVKSQRTP. A phosphothreonine mark is found at T997, T1002, and T1004. Residues S1008 and S1019 each carry the phosphoserine modification. Disordered regions lie at residues 1032 to 1078, 1096 to 1152, and 1191 to 1349; these read CFGD…PFES, PNED…DKEQ, and KETQ…EYTG. The segment covering 1039–1075 has biased composition (basic and acidic residues); that stretch reads PQLKESKPKEEVKKEELESKGTLEQRGHNPEEKEIKP. Over residues 1105-1117 the composition is skewed to pro residues; it reads TEPPPKPVFPPTA. Composition is skewed to basic and acidic residues over residues 1132–1152 and 1191–1252; these read KPPEKADVPVEKYDGESDKEQ and KETQ…DTVI. S1148 bears the Phosphoserine mark. A coiled-coil region spans residues 1166-1238; the sequence is KDDQKAENDM…REFIRQEYMR (73 aa). A compositionally biased stretch (polar residues) spans 1287–1299; it reads SSLSLASLNTGDN. S1313, S1319, and S1321 each carry phosphoserine. Positions 1334-1346 are enriched in polar residues; it reads NASTTSSVASGTE. The CKK domain maps to 1349–1483; sequence GPKLYKEPSA…QTKRPVTPKK (135 aa).

The protein belongs to the CAMSAP1 family. Interacts with CAMSAP3. Interacts with KATNA1 and KATNB1; leading to regulate the length of CAMSAP2-decorated microtubule stretches. Interacts with a complex formed by AKAP9 and PDE4DIP isoform 13/MMG8/SMYLE, which recruits CAMSAP2 to the Golgi. Interacts with MAPRE1/EB1.

The protein resides in the cytoplasm. Its subcellular location is the cytoskeleton. It is found in the golgi apparatus. The protein localises to the cilium basal body. Key microtubule-organizing protein that specifically binds the minus-end of non-centrosomal microtubules and regulates their dynamics and organization. Specifically recognizes growing microtubule minus-ends and autonomously decorates and stabilizes microtubule lattice formed by microtubule minus-end polymerization. Acts on free microtubule minus-ends that are not capped by microtubule-nucleating proteins or other factors and protects microtubule minus-ends from depolymerization. In addition, it also reduces the velocity of microtubule polymerization. Through the microtubule cytoskeleton, also regulates the organization of cellular organelles including the Golgi and the early endosomes. Essential for the tethering, but not for nucleation of non-centrosomal microtubules at the Golgi: together with Golgi-associated proteins AKAP9 and PDE4DIP, required to tether non-centrosomal minus-end microtubules to the Golgi, an important step for polarized cell movement. Also acts as a regulator of neuronal polarity and development: localizes to non-centrosomal microtubule minus-ends in neurons and stabilizes non-centrosomal microtubules, which is required for neuronal polarity, axon specification and dendritic branch formation. Through the microtubule cytoskeleton, regulates the autophagosome transport. This is Calmodulin-regulated spectrin-associated protein 2 from Homo sapiens (Human).